A 64-amino-acid chain; its full sequence is MASKKGVRITITVECTECRTNTNKRSNGVSRYTTSKNRRNTTGRLEIKKFCPHCNAHTVHKEIK.

Belongs to the bacterial ribosomal protein bL33 family.

This chain is Large ribosomal subunit protein bL33, found in Picosynechococcus sp. (strain ATCC 27264 / PCC 7002 / PR-6) (Agmenellum quadruplicatum).